A 211-amino-acid chain; its full sequence is Thymidylate kinase (211 aa).

10–17 (GVEGCGKT) contributes to the ATP binding site.

Belongs to the thymidylate kinase family.

It catalyses the reaction dTMP + ATP = dTDP + ADP. In terms of biological role, phosphorylation of dTMP to form dTDP in both de novo and salvage pathways of dTTP synthesis. This Nostoc sp. (strain PCC 7120 / SAG 25.82 / UTEX 2576) protein is Thymidylate kinase.